We begin with the raw amino-acid sequence, 549 residues long: Eukaryotic translation initiation factor 4B2 (549 aa).

Disordered stretches follow at residues 1-446 (MSKP…DLIR) and 465-549 (FRPR…REGW). Positions 24–46 (AEATATAADSQSFPSLKEAATAK) are enriched in low complexity. Composition is skewed to gly residues over residues 96–109 (RLGG…GGRS) and 126–136 (SWGGGGGGRRS). The Nuclear localization signal 1 signature appears at 169 to 176 (GKKSLPSF). The segment covering 184-218 (RYGGGGGSFGGGGGGGAGSYGGGGAGAGSGGGGGF) has biased composition (gly residues). A Nuclear localization signal 2 motif is present at residues 234–241 (SSTFGSGF). Over residues 263-278 (QEERRRLVFEPRKADT) the composition is skewed to basic and acidic residues. Over residues 281–292 (SETPTAVKTSKP) the composition is skewed to polar residues. A compositionally biased stretch (basic and acidic residues) spans 299-323 (RPREQVLAEKGLDWKKLDSDIEAKK). The span at 327-349 (SRPSSAQSSRPSSAQSNRSESSA) shows a compositional bias: low complexity. Basic and acidic residues-rich tracts occupy residues 369–431 (AKPR…KESQ), 485–507 (ERPH…ERPR), and 518–549 (PVDD…REGW).

Belongs to the eIF-4 subunit B family. In terms of assembly, homodimer. Nonspherical monomer. mRNA-discriminating component of initiation complexes. Phosphorylated.

The protein localises to the nucleus. Promotes the eIF4F and eIF4A RNA-dependent ATP-hydrolysis activity with different efficiency depending on mRNAs, thus providing mRNA discrimination during initiation of translation. The protein is Eukaryotic translation initiation factor 4B2 of Arabidopsis thaliana (Mouse-ear cress).